A 1357-amino-acid chain; its full sequence is DNA-directed RNA polymerase subunit beta (1357 aa).

This sequence belongs to the RNA polymerase beta chain family. As to quaternary structure, the RNAP catalytic core consists of 2 alpha, 1 beta, 1 beta' and 1 omega subunit. When a sigma factor is associated with the core the holoenzyme is formed, which can initiate transcription.

It catalyses the reaction RNA(n) + a ribonucleoside 5'-triphosphate = RNA(n+1) + diphosphate. Its function is as follows. DNA-dependent RNA polymerase catalyzes the transcription of DNA into RNA using the four ribonucleoside triphosphates as substrates. In Pseudomonas putida (strain ATCC 700007 / DSM 6899 / JCM 31910 / BCRC 17059 / LMG 24140 / F1), this protein is DNA-directed RNA polymerase subunit beta.